The primary structure comprises 139 residues: S-adenosylmethionine decarboxylase proenzyme (139 aa).

S63 functions as the Schiff-base intermediate with substrate; via pyruvic acid in the catalytic mechanism. S63 carries the pyruvic acid (Ser); by autocatalysis modification. The active-site Proton acceptor; for processing activity is the H68. C83 serves as the catalytic Proton donor; for catalytic activity.

It belongs to the prokaryotic AdoMetDC family. Type 1 subfamily. In terms of assembly, heterotetramer of two alpha and two beta chains arranged as a dimer of alpha/beta heterodimers. It depends on pyruvate as a cofactor. Post-translationally, is synthesized initially as an inactive proenzyme. Formation of the active enzyme involves a self-maturation process in which the active site pyruvoyl group is generated from an internal serine residue via an autocatalytic post-translational modification. Two non-identical subunits are generated from the proenzyme in this reaction, and the pyruvate is formed at the N-terminus of the alpha chain, which is derived from the carboxyl end of the proenzyme. The post-translation cleavage follows an unusual pathway, termed non-hydrolytic serinolysis, in which the side chain hydroxyl group of the serine supplies its oxygen atom to form the C-terminus of the beta chain, while the remainder of the serine residue undergoes an oxidative deamination to produce ammonia and the pyruvoyl group blocking the N-terminus of the alpha chain.

The enzyme catalyses S-adenosyl-L-methionine + H(+) = S-adenosyl 3-(methylsulfanyl)propylamine + CO2. It functions in the pathway amine and polyamine biosynthesis; S-adenosylmethioninamine biosynthesis; S-adenosylmethioninamine from S-adenosyl-L-methionine: step 1/1. Functionally, catalyzes the decarboxylation of S-adenosylmethionine to S-adenosylmethioninamine (dcAdoMet), the propylamine donor required for the synthesis of the polyamines spermine and spermidine from the diamine putrescine. This is S-adenosylmethionine decarboxylase proenzyme from Pyrococcus furiosus (strain ATCC 43587 / DSM 3638 / JCM 8422 / Vc1).